The following is a 577-amino-acid chain: ABC transporter G family member 4 (577 aa).

The 243-residue stretch at 6–248 (LSTSSISYAK…LLSKGFTVPS (243 aa)) folds into the ABC transporter domain. Residue 48 to 55 (GPSGAGKS) participates in ATP binding. An ABC transmembrane type-2 domain is found at 299 to 509 (TEISLLSSRF…ALDALLINEY (211 aa)). A run of 7 helical transmembrane segments spans residues 318-338 (LLLT…TIYL), 353-373 (LFAF…PIFI), 400-420 (VFLP…YFLV), 429-449 (LAYF…FVLF), 458-478 (IAGT…SGYF), 487-507 (YWLF…LLIN), and 548-568 (FNVY…FLVL).

It belongs to the ABC transporter superfamily. ABCG family. Eye pigment precursor importer (TC 3.A.1.204) subfamily.

The protein resides in the membrane. This is ABC transporter G family member 4 (ABCG4) from Arabidopsis thaliana (Mouse-ear cress).